We begin with the raw amino-acid sequence, 328 residues long: Cytochrome c biogenesis protein CcsA (328 aa).

The next 8 membrane-spanning stretches (helical) occupy residues 12-32 (HISF…LLLG), 45-65 (GMII…IFSG), 72-92 (LYES…VLCL), 100-120 (FNTI…SGLL), 145-165 (MILG…ILVI), 234-254 (TISL…VWAN), 263-283 (WDPK…YLHI), and 296-316 (IVAS…NLLG).

The protein belongs to the CcmF/CycK/Ccl1/NrfE/CcsA family. In terms of assembly, may interact with Ccs1.

The protein resides in the plastid. It is found in the chloroplast thylakoid membrane. In terms of biological role, required during biogenesis of c-type cytochromes (cytochrome c6 and cytochrome f) at the step of heme attachment. The polypeptide is Cytochrome c biogenesis protein CcsA (Phaseolus vulgaris (Kidney bean)).